We begin with the raw amino-acid sequence, 102 residues long: Putative ubiquitin-like protein FUBI-like protein ENSP00000310146 (102 aa).

The Ubiquitin-like domain occupies 23–99; it reads LCPQVAYVRA…LEVVGRRLGV (77 aa).

The polypeptide is Putative ubiquitin-like protein FUBI-like protein ENSP00000310146 (Homo sapiens (Human)).